A 586-amino-acid polypeptide reads, in one-letter code: Pectinesterase 1 (586 aa).

The N-terminal stretch at 1-49 (MDSVNSFKGYGKVDEAQDLALKKKTRKRLLLLSISVVVLIAVIIAAVVA) is a signal peptide. 5 N-linked (GlcNAc...) asparagine glycosylation sites follow: Asn-57, Asn-97, Asn-154, Asn-201, and Asn-207. Residues 250-253 (RRLM) carry the RRLM cleavage motif motif. Residues 269–272 (RRLL) carry the RRLL cleavage motif motif. Thr-355 and Gln-385 together coordinate substrate. The active-site Proton donor is Asp-408. A disulfide bridge links Cys-422 with Cys-442. Residue Asp-429 is the Nucleophile of the active site. Asn-466 carries N-linked (GlcNAc...) asparagine glycosylation. 2 residues coordinate substrate: Arg-492 and Trp-494.

It in the N-terminal section; belongs to the PMEI family. The protein in the C-terminal section; belongs to the pectinesterase family. Interacts with SBT6.1. In terms of tissue distribution, expressed in siliques.

Its subcellular location is the secreted. It localises to the cell wall. The protein localises to the golgi apparatus membrane. It catalyses the reaction [(1-&gt;4)-alpha-D-galacturonosyl methyl ester](n) + n H2O = [(1-&gt;4)-alpha-D-galacturonosyl](n) + n methanol + n H(+). Its pathway is glycan metabolism; pectin degradation; 2-dehydro-3-deoxy-D-gluconate from pectin: step 1/5. Acts in the modification of cell walls via demethylesterification of cell wall pectin. Demethylates protein phosphatase 2A (PP2A) that have been reversibly carboxymethylated by LCMT1. Acts as a negative regulators of genes involved in salt stress response. In Arabidopsis thaliana (Mouse-ear cress), this protein is Pectinesterase 1 (PME1).